The chain runs to 335 residues: Anthranilate phosphoribosyltransferase (335 aa).

5-phospho-alpha-D-ribose 1-diphosphate-binding positions include Gly-79, Gly-82–Asp-83, Thr-87, Asn-89–Thr-92, Lys-107–Ser-115, and Ser-119. Residue Gly-79 coordinates anthranilate. Ser-91 is a Mg(2+) binding site. Asn-110 is an anthranilate binding site. Arg-165 serves as a coordination point for anthranilate. Mg(2+)-binding residues include Asp-223 and Glu-224.

This sequence belongs to the anthranilate phosphoribosyltransferase family. Homodimer. Mg(2+) serves as cofactor.

It catalyses the reaction N-(5-phospho-beta-D-ribosyl)anthranilate + diphosphate = 5-phospho-alpha-D-ribose 1-diphosphate + anthranilate. The protein operates within amino-acid biosynthesis; L-tryptophan biosynthesis; L-tryptophan from chorismate: step 2/5. Functionally, catalyzes the transfer of the phosphoribosyl group of 5-phosphorylribose-1-pyrophosphate (PRPP) to anthranilate to yield N-(5'-phosphoribosyl)-anthranilate (PRA). This Buchnera aphidicola subsp. Diuraphis noxia protein is Anthranilate phosphoribosyltransferase.